A 337-amino-acid polypeptide reads, in one-letter code: Glyceraldehyde-3-phosphate dehydrogenase (337 aa).

NAD(+)-binding positions include 12–13 (RI), Asp-34, and Arg-79. Residues 150 to 152 (SCT), Thr-181, 210 to 211 (TG), and Arg-233 contribute to the D-glyceraldehyde 3-phosphate site. Residue Cys-151 is the Nucleophile of the active site. Asn-315 contributes to the NAD(+) binding site.

It belongs to the glyceraldehyde-3-phosphate dehydrogenase family. Homotetramer.

Its subcellular location is the cytoplasm. It catalyses the reaction D-glyceraldehyde 3-phosphate + phosphate + NAD(+) = (2R)-3-phospho-glyceroyl phosphate + NADH + H(+). It participates in carbohydrate degradation; glycolysis; pyruvate from D-glyceraldehyde 3-phosphate: step 1/5. This Claviceps purpurea (strain 20.1) (Ergot fungus) protein is Glyceraldehyde-3-phosphate dehydrogenase (GPD-1).